The primary structure comprises 174 residues: Gamma-crystallin E (174 aa).

Beta/gamma crystallin 'Greek key' domains are found at residues 2–40 (GKIT…RVDS) and 41–83 (GCWM…RLIP). A connecting peptide region spans residues 84–87 (HSSS). 2 consecutive Beta/gamma crystallin 'Greek key' domains span residues 88-128 (HRIK…HVME) and 129-171 (GYWV…RRIM).

The protein belongs to the beta/gamma-crystallin family. Detected in the superior olivary complex of the auditory hindbrain.

Functionally, crystallins are the dominant structural components of the vertebrate eye lens. The polypeptide is Gamma-crystallin E (Cryge) (Mus musculus (Mouse)).